We begin with the raw amino-acid sequence, 566 residues long: Arginine--tRNA ligase (566 aa).

The short motif at 121 to 131 is the 'HIGH' region element; it reads ANPNGPFHIGH.

The protein belongs to the class-I aminoacyl-tRNA synthetase family.

The protein resides in the cytoplasm. It catalyses the reaction tRNA(Arg) + L-arginine + ATP = L-arginyl-tRNA(Arg) + AMP + diphosphate. The polypeptide is Arginine--tRNA ligase (Methanococcus maripaludis (strain C6 / ATCC BAA-1332)).